The sequence spans 347 residues: Phenylalanine--tRNA ligase alpha subunit (347 aa).

Residue E261 participates in Mg(2+) binding.

It belongs to the class-II aminoacyl-tRNA synthetase family. Phe-tRNA synthetase alpha subunit type 1 subfamily. As to quaternary structure, tetramer of two alpha and two beta subunits. It depends on Mg(2+) as a cofactor.

The protein localises to the cytoplasm. It catalyses the reaction tRNA(Phe) + L-phenylalanine + ATP = L-phenylalanyl-tRNA(Phe) + AMP + diphosphate + H(+). The polypeptide is Phenylalanine--tRNA ligase alpha subunit (Streptococcus pyogenes serotype M1).